A 545-amino-acid chain; its full sequence is CTP synthase (545 aa).

The interval Met1–Met267 is amidoligase domain. Ser13 serves as a coordination point for CTP. Ser13 is a UTP binding site. ATP-binding positions include Ser14–Ile19 and Asp71. The Mg(2+) site is built by Asp71 and Glu141. Residues Asp148–Glu150, Lys188–Gln193, and Lys224 each bind CTP. Residues Lys188 to Gln193 and Lys224 contribute to the UTP site. The Glutamine amidotransferase type-1 domain maps to Glu292–Pro534. Gly354 provides a ligand contact to L-glutamine. Residue Cys381 is the Nucleophile; for glutamine hydrolysis of the active site. L-glutamine is bound by residues Leu382–Gln385, Glu405, and Arg462. Active-site residues include His507 and Glu509.

The protein belongs to the CTP synthase family. In terms of assembly, homotetramer.

It carries out the reaction UTP + L-glutamine + ATP + H2O = CTP + L-glutamate + ADP + phosphate + 2 H(+). The catalysed reaction is L-glutamine + H2O = L-glutamate + NH4(+). It catalyses the reaction UTP + NH4(+) + ATP = CTP + ADP + phosphate + 2 H(+). It participates in pyrimidine metabolism; CTP biosynthesis via de novo pathway; CTP from UDP: step 2/2. With respect to regulation, allosterically activated by GTP, when glutamine is the substrate; GTP has no effect on the reaction when ammonia is the substrate. The allosteric effector GTP functions by stabilizing the protein conformation that binds the tetrahedral intermediate(s) formed during glutamine hydrolysis. Inhibited by the product CTP, via allosteric rather than competitive inhibition. Functionally, catalyzes the ATP-dependent amination of UTP to CTP with either L-glutamine or ammonia as the source of nitrogen. Regulates intracellular CTP levels through interactions with the four ribonucleotide triphosphates. This chain is CTP synthase, found in Trichormus variabilis (strain ATCC 29413 / PCC 7937) (Anabaena variabilis).